Here is a 710-residue protein sequence, read N- to C-terminus: MQGKKPGGSSGGGRSGELQGDEAQRNKKKKKKVSCFSNIKIFLVSECALMLAQGTVGAYLVSVLTTLERRFNLQSADVGVIASSFEIGNLALILFVSYFGARGHRPRLIGCGGIVMALGALLSALPEFLTHQYKYEAGEIRWGAEGRDVCATNGSSSDEGPDPDLICRNRTATNMMYLLLIGAQVLLGIGATPVQPLGVSYIDDHVRRKDSSLYIGILFTMLVFGPACGFILGSFCTKIYVDAVFIDTSNLDITPDDPRWIGAWWGGFLLCGALLFFSSLLMFGFPQSLPPHSEPGMESEQAMLPEREYERPKPSNGVLRHPLEPDSSASCFQQLRVIPKVTKHLLSNPVFTCIVLAACMEIAVVAGFAAFLGKYLEQQFNLTTSSANQLLGMTAIPCACLGIFLGGLLVKKLSLSALGAIRMAMLVNLVSTACYVSFLFLGCDTVPVAGVTVRYGNNSARGSPLDPYSPCNNNCECQTDSFTPVCGADGITYLSACFAGCNSTNLTGCACLTTVPPENATVVPGKCPSPGCQEAFLTFLCVMCVCSLIGAMAQTPSVIILIRTVSPELKSYALGVLFLLLRLLGFIPPPLIFGAGIDSTCLFWSTFCGEQGACVLYDNVVYRYLYVSIAIALKSFAFILYTTTWQCLRKNYKRYIKNHEGGLSTSEFLASTLTLDNLGRDPVPAHQTHRTKFIYNLEDHEWCENMESVL.

N-acetylmethionine is present on Met-1. The span at 1-15 shows a compositional bias: gly residues; it reads MQGKKPGGSSGGGRS. Residues 1 to 25 form a disordered region; it reads MQGKKPGGSSGGGRSGELQGDEAQR. Residues 1 to 40 are Cytoplasmic-facing; that stretch reads MQGKKPGGSSGGGRSGELQGDEAQRNKKKKKKVSCFSNIK. Residues 41–60 traverse the membrane as a helical segment; the sequence is IFLVSECALMLAQGTVGAYL. At 61 to 79 the chain is on the extracellular side; that stretch reads VSVLTTLERRFNLQSADVG. The helical transmembrane segment at 80–100 threads the bilayer; the sequence is VIASSFEIGNLALILFVSYFG. Over 101–106 the chain is Cytoplasmic; that stretch reads ARGHRP. Residues 107-131 form a helical membrane-spanning segment; it reads RLIGCGGIVMALGALLSALPEFLTH. Residues 132–174 are Extracellular-facing; the sequence is QYKYEAGEIRWGAEGRDVCATNGSSSDEGPDPDLICRNRTATN. N-linked (GlcNAc...) asparagine glycans are attached at residues Asn-153 and Asn-169. A helical membrane pass occupies residues 175-203; sequence MMYLLLIGAQVLLGIGATPVQPLGVSYID. Over 204–222 the chain is Cytoplasmic; that stretch reads DHVRRKDSSLYIGILFTML. The chain crosses the membrane as a helical span at residues 223–243; it reads VFGPACGFILGSFCTKIYVDA. Over 244-261 the chain is Extracellular; that stretch reads VFIDTSNLDITPDDPRWI. A helical membrane pass occupies residues 262 to 286; that stretch reads GAWWGGFLLCGALLFFSSLLMFGFP. At 287-344 the chain is on the cytoplasmic side; it reads QSLPPHSEPGMESEQAMLPEREYERPKPSNGVLRHPLEPDSSASCFQQLRVIPKVTKH. The chain crosses the membrane as a helical span at residues 345–366; the sequence is LLSNPVFTCIVLAACMEIAVVA. The Extracellular portion of the chain corresponds to 367–386; the sequence is GFAAFLGKYLEQQFNLTTSS. An N-linked (GlcNAc...) asparagine glycan is attached at Asn-381. Residues 387 to 410 traverse the membrane as a helical segment; it reads ANQLLGMTAIPCACLGIFLGGLLV. At 411 to 414 the chain is on the cytoplasmic side; the sequence is KKLS. A helical transmembrane segment spans residues 415-438; that stretch reads LSALGAIRMAMLVNLVSTACYVSF. Topologically, residues 439–539 are extracellular; that stretch reads LFLGCDTVPV…PGCQEAFLTF (101 aa). The N-linked (GlcNAc...) asparagine glycan is linked to Asn-457. Positions 465–513 constitute a Kazal-like domain; that stretch reads LDPYSPCNNNCECQTDSFTPVCGADGITYLSACFAGCNSTNLTGCACLT. Intrachain disulfides connect Cys-471/Cys-501, Cys-477/Cys-497, and Cys-486/Cys-511. 3 N-linked (GlcNAc...) asparagine glycosylation sites follow: Asn-502, Asn-505, and Asn-519. The helical transmembrane segment at 540–562 threads the bilayer; it reads LCVMCVCSLIGAMAQTPSVIILI. At 563–571 the chain is on the cytoplasmic side; the sequence is RTVSPELKS. The helical transmembrane segment at 572–597 threads the bilayer; the sequence is YALGVLFLLLRLLGFIPPPLIFGAGI. Topologically, residues 598 to 630 are extracellular; the sequence is DSTCLFWSTFCGEQGACVLYDNVVYRYLYVSIA. The helical transmembrane segment at 631-648 threads the bilayer; the sequence is IALKSFAFILYTTTWQCL. Residues 649 to 705 lie on the Cytoplasmic side of the membrane; that stretch reads RKNYKRYIKNHEGGLSTSEFLASTLTLDNLGRDPVPAHQTHRTKFIYNLEDHEWCEN.

Belongs to the organo anion transporter (TC 2.A.60) family. Expressed in many brain regions, including frontal cortex, brain stem and cerebellum. Associated with neuronal bodies in a punctated matter. Detected at the arcuate nucleus and the choroid plexus (at protein level). Little expression, if any, in oligodendrocytes. In the cardiovascular system, detected in cardiac muscle cells and endothelial cells of aorta, coronary artery and left ventricular endocardium (at protein level). In the respiratory system, detected in alveolar epithelial cells and in mucosal epithelium of the trachea (at protein level). In the reproductive system, detected in spermatozoa, oocytes, smooth muscle cells of the ovary, epithelium of the glandula uterine, smooth muscle cells of the myometrium and epithelium of the endometrium (at protein level). In the kidney, detected in afferent and efferent arterioles, and the epithelium of distal tubules and collecting tubules (at protein level).

Its subcellular location is the basolateral cell membrane. The protein resides in the apical cell membrane. The protein localises to the basal cell membrane. The catalysed reaction is L-thyroxine(out) = L-thyroxine(in). The enzyme catalyses prostaglandin E1(out) = prostaglandin E1(in). It carries out the reaction prostaglandin E2(out) = prostaglandin E2(in). It catalyses the reaction prostaglandin F2alpha(out) = prostaglandin F2alpha(in). The catalysed reaction is (5Z,8Z,11Z,14Z)-eicosatetraenoate(out) = (5Z,8Z,11Z,14Z)-eicosatetraenoate(in). The enzyme catalyses taurocholate(out) = taurocholate(in). It carries out the reaction glycocholate(out) = glycocholate(in). It catalyses the reaction estrone 3-sulfate(out) = estrone 3-sulfate(in). The catalysed reaction is argipressin(out) = argipressin(in). In terms of biological role, putative organic anion antiporter with apparent broad substrate specificity. Recognizes various substrates including thyroid hormone L-thyroxine, prostanoids such as prostaglandin E1 and E2, bile acids such as taurocholate, glycolate and glycochenodeoxycholate and peptide hormones such as L-arginine vasopressin, likely operating in a tissue-specific manner. The transport mechanism, its electrogenicity and potential tissue-specific counterions remain to be elucidated. The sequence is that of Solute carrier organic anion transporter family member 3A1 (Slco3a1) from Rattus norvegicus (Rat).